The sequence spans 400 residues: Sensory histidine kinase/phosphatase NtrB (400 aa).

Composition is skewed to low complexity over residues 1–10 and 18–27; these read MARASAAAPL and RAPSSSYRPV. Residues 1–27 form a disordered region; sequence MARASAAAPLPRRPARPRAPSSSYRPV. Residues 29-99 form the PAS domain; sequence PCIDPSVMLN…IEQVQQGRHR (71 aa). Residues 163–381 enclose the Histidine kinase domain; the sequence is MLGHEVKNPL…VFKVSLPMFD (219 aa). His-166 carries the phosphohistidine; by autocatalysis modification.

Autophosphorylated.

The protein resides in the cytoplasm. It carries out the reaction ATP + protein L-histidine = ADP + protein N-phospho-L-histidine.. In terms of biological role, member of the two-component regulatory system NtrB/NtrC, which controls expression of the nitrogen-regulated (ntr) genes in response to nitrogen limitation. Under conditions of nitrogen limitation, NtrB autophosphorylates and transfers the phosphoryl group to NtrC. In the presence of nitrogen, acts as a phosphatase that dephosphorylates and inactivates NtrC. The polypeptide is Sensory histidine kinase/phosphatase NtrB (Azospirillum brasilense).